A 793-amino-acid polypeptide reads, in one-letter code: Caldesmon (793 aa).

Arg-12 is modified (phosphoserine). A Phosphotyrosine modification is found at Glu-21. Disordered stretches follow at residues 26–94 (AYQR…DDEA), 108–407 (QKRL…IKGE), and 434–458 (KKQGEEKGTKVQAKREKLQEDKPTF). Residues 26–207 (AYQRNDDDEE…PKRGSIGENQ (182 aa)) form a myosin and calmodulin-binding region. The segment covering 47–56 (QERLRQKQEE) has biased composition (basic and acidic residues). The segment covering 60–74 (GQVTDQVEVNAQNSV) has biased composition (polar residues). A compositionally biased stretch (basic and acidic residues) spans 108–122 (QKRLQEALERQKEFD). Position 129 is a phosphoserine (Ser-129). 2 stretches are compositionally biased toward basic and acidic residues: residues 146–162 (TTEKEEKSESRQERYEI) and 173–188 (QKNDWRDAEENKKEDK). Residues Glu-196 and Ser-202 each carry the phosphoserine modification. Glycyl lysine isopeptide (Lys-Gly) (interchain with G-Cter in SUMO2) cross-links involve residues Ile-203 and Glu-209. Basic and acidic residues-rich tracts occupy residues 236 to 407 (EEPK…IKGE) and 435 to 458 (KQGEEKGTKVQAKREKLQEDKPTF). Tandem repeats lie at residues 319-332 (EEEKRAAEERQRIK), 333-346 (EEEKRAAEERQRIK), and 347-360 (EEEKRAAEERQRIK). The interval 319 to 375 (EEEKRAAEERQRIKEEEKRAAEERQRIKEEEKRAAEERQRIKEEEKRAAEERQRARA) is 3 X 14 AA tandem repeats of E-E-E-K-R-A-A-E-E-R-Q-R-I-K. Residue Lys-459 forms a Glycyl lysine isopeptide (Lys-Gly) (interchain with G-Cter in SUMO2) linkage. The disordered stretch occupies residues 492–640 (KSQNGEFMTH…KKPFKCFTPK (149 aa)). 2 stretches are compositionally biased toward basic and acidic residues: residues 532-558 (AGKRLEELRRRRGETESEEFEKLKQKQ) and 566-633 (EELK…DKKP). Residues 564–621 (ELEELKKKREERRKVLEEEEQRRKQEEADRKLREEEEKRRLKEEIERRRAEAAEKRQK) form a tropomyosin-binding region. Position 643 is a phosphoserine (Ser-643). A Glycyl lysine isopeptide (Lys-Gly) (interchain with G-Cter in SUMO2) cross-link involves residue Lys-645. Residues 653–686 (LNKSVQKSSGVKSTHQAAIVSKIDSRLEQYTSAI) form a strong actin-binding region. Ser-656 bears the Phosphoserine mark. The tract at residues 664 to 674 (KSTHQAAIVSK) is tropomyosin-binding. 3 disordered regions span residues 687-706 (EGTKSAKPTKPAASDLPVPA), 721-740 (VFSSPTAAGTPNKETAGLKV), and 747-793 (NEWL…PTKV). A calmodulin-binding region spans residues 716–722 (WEKGNVF). Residues 721–733 (VFSSPTAAGTPNK) are compositionally biased toward polar residues. A Phosphoserine modification is found at Ser-724. Phosphothreonine occurs at positions 730 and 753. Ser-759 carries the post-translational modification Phosphoserine. The segment covering 765 to 784 (SDLRPGDVSSKRNLWEKQSV) has biased composition (basic and acidic residues). The interval 768–793 (RPGDVSSKRNLWEKQSVDKVTSPTKV) is weak actin-binding. Ser-789 carries the phosphoserine modification.

The protein belongs to the caldesmon family. Post-translationally, in non-muscle cells, phosphorylation by CDK1 during mitosis causes caldesmon to dissociate from microfilaments. Phosphorylation reduces caldesmon binding to actin, myosin, and calmodulin as well as its inhibition of actomyosin ATPase activity. Phosphorylation also occurs in both quiescent and dividing smooth muscle cells with similar effects on the interaction with actin and calmodulin and on microfilaments reorganization. CDK1-mediated phosphorylation promotes Schwann cell migration during peripheral nerve regeneration. As to expression, high-molecular-weight caldesmon (isoform 1) is predominantly expressed in smooth muscles, whereas low-molecular-weight caldesmon (isoforms 2, 3, 4 and 5) are widely distributed in non-muscle tissues and cells. Not expressed in skeletal muscle or heart.

Its subcellular location is the cytoplasm. It is found in the cytoskeleton. The protein resides in the myofibril. The protein localises to the stress fiber. Its function is as follows. Actin- and myosin-binding protein implicated in the regulation of actomyosin interactions in smooth muscle and nonmuscle cells (could act as a bridge between myosin and actin filaments). Stimulates actin binding of tropomyosin which increases the stabilization of actin filament structure. In muscle tissues, inhibits the actomyosin ATPase by binding to F-actin. This inhibition is attenuated by calcium-calmodulin and is potentiated by tropomyosin. Interacts with actin, myosin, two molecules of tropomyosin and with calmodulin. Also plays an essential role during cellular mitosis and receptor capping. Involved in Schwann cell migration during peripheral nerve regeneration. The sequence is that of Caldesmon (CALD1) from Homo sapiens (Human).